The sequence spans 71 residues: Antitoxin ParD2 (71 aa).

In terms of biological role, antitoxin component of a type II toxin-antitoxin (TA) system. The polypeptide is Antitoxin ParD2 (parD2) (Mycobacterium tuberculosis (strain CDC 1551 / Oshkosh)).